The following is a 37-amino-acid chain: Large ribosomal subunit protein bL36c (37 aa).

Belongs to the bacterial ribosomal protein bL36 family.

It is found in the plastid. It localises to the chloroplast. In Psilotum nudum (Whisk fern), this protein is Large ribosomal subunit protein bL36c.